The chain runs to 140 residues: Large ribosomal subunit protein uL22 (140 aa).

The segment at 115-140 is disordered; the sequence is AKPAAAKKDPKAAAAKADANAGTKEG.

It belongs to the universal ribosomal protein uL22 family. In terms of assembly, part of the 50S ribosomal subunit.

In terms of biological role, this protein binds specifically to 23S rRNA; its binding is stimulated by other ribosomal proteins, e.g. L4, L17, and L20. It is important during the early stages of 50S assembly. It makes multiple contacts with different domains of the 23S rRNA in the assembled 50S subunit and ribosome. The globular domain of the protein is located near the polypeptide exit tunnel on the outside of the subunit, while an extended beta-hairpin is found that lines the wall of the exit tunnel in the center of the 70S ribosome. The chain is Large ribosomal subunit protein uL22 from Heliobacterium modesticaldum (strain ATCC 51547 / Ice1).